The primary structure comprises 383 residues: Probable butyrate kinase (383 aa).

Belongs to the acetokinase family.

The protein resides in the cytoplasm. The catalysed reaction is butanoate + ATP = butanoyl phosphate + ADP. The polypeptide is Probable butyrate kinase (Deinococcus radiodurans (strain ATCC 13939 / DSM 20539 / JCM 16871 / CCUG 27074 / LMG 4051 / NBRC 15346 / NCIMB 9279 / VKM B-1422 / R1)).